A 721-amino-acid polypeptide reads, in one-letter code: Fatty acid oxidation complex subunit alpha (721 aa).

The tract at residues 1–190 is enoyl-CoA hydratase/isomerase; the sequence is MIYEGKAITV…KVGAVDAVVA (190 aa). D297 contributes to the substrate binding site. The 3-hydroxyacyl-CoA dehydrogenase stretch occupies residues 312-721; that stretch reads KDVKQAAVLG…SFFGQASSEE (410 aa). Residues M325, D344, 401-403, K408, and S430 each bind NAD(+); that span reads VVE. H451 serves as the catalytic For 3-hydroxyacyl-CoA dehydrogenase activity. Residue N454 coordinates NAD(+). N501 and Y660 together coordinate substrate.

In the N-terminal section; belongs to the enoyl-CoA hydratase/isomerase family. This sequence in the C-terminal section; belongs to the 3-hydroxyacyl-CoA dehydrogenase family. As to quaternary structure, heterotetramer of two alpha chains (FadB) and two beta chains (FadA).

The enzyme catalyses a (3S)-3-hydroxyacyl-CoA + NAD(+) = a 3-oxoacyl-CoA + NADH + H(+). It catalyses the reaction a (3S)-3-hydroxyacyl-CoA = a (2E)-enoyl-CoA + H2O. It carries out the reaction a 4-saturated-(3S)-3-hydroxyacyl-CoA = a (3E)-enoyl-CoA + H2O. The catalysed reaction is (3S)-3-hydroxybutanoyl-CoA = (3R)-3-hydroxybutanoyl-CoA. The enzyme catalyses a (3Z)-enoyl-CoA = a 4-saturated (2E)-enoyl-CoA. It catalyses the reaction a (3E)-enoyl-CoA = a 4-saturated (2E)-enoyl-CoA. It functions in the pathway lipid metabolism; fatty acid beta-oxidation. Its function is as follows. Involved in the aerobic and anaerobic degradation of long-chain fatty acids via beta-oxidation cycle. Catalyzes the formation of 3-oxoacyl-CoA from enoyl-CoA via L-3-hydroxyacyl-CoA. It can also use D-3-hydroxyacyl-CoA and cis-3-enoyl-CoA as substrate. The protein is Fatty acid oxidation complex subunit alpha of Pseudomonas syringae pv. syringae (strain B728a).